A 264-amino-acid chain; its full sequence is S-adenosylmethionine decarboxylase proenzyme (264 aa).

The active-site Schiff-base intermediate with substrate; via pyruvic acid is the serine 112. Position 112 is a pyruvic acid (Ser); by autocatalysis (serine 112). The active-site Proton acceptor; for processing activity is histidine 117. Cysteine 140 functions as the Proton donor; for catalytic activity in the catalytic mechanism.

This sequence belongs to the prokaryotic AdoMetDC family. Type 2 subfamily. Heterooctamer of four alpha and four beta chains arranged as a tetramer of alpha/beta heterodimers. Pyruvate is required as a cofactor. Post-translationally, is synthesized initially as an inactive proenzyme. Formation of the active enzyme involves a self-maturation process in which the active site pyruvoyl group is generated from an internal serine residue via an autocatalytic post-translational modification. Two non-identical subunits are generated from the proenzyme in this reaction, and the pyruvate is formed at the N-terminus of the alpha chain, which is derived from the carboxyl end of the proenzyme. The post-translation cleavage follows an unusual pathway, termed non-hydrolytic serinolysis, in which the side chain hydroxyl group of the serine supplies its oxygen atom to form the C-terminus of the beta chain, while the remainder of the serine residue undergoes an oxidative deamination to produce ammonia and the pyruvoyl group blocking the N-terminus of the alpha chain.

The enzyme catalyses S-adenosyl-L-methionine + H(+) = S-adenosyl 3-(methylsulfanyl)propylamine + CO2. Its pathway is amine and polyamine biosynthesis; S-adenosylmethioninamine biosynthesis; S-adenosylmethioninamine from S-adenosyl-L-methionine: step 1/1. Its function is as follows. Catalyzes the decarboxylation of S-adenosylmethionine to S-adenosylmethioninamine (dcAdoMet), the propylamine donor required for the synthesis of the polyamines spermine and spermidine from the diamine putrescine. The sequence is that of S-adenosylmethionine decarboxylase proenzyme from Pectobacterium atrosepticum (strain SCRI 1043 / ATCC BAA-672) (Erwinia carotovora subsp. atroseptica).